The following is a 441-amino-acid chain: MDTDILKMQDREVFEAIALETGRQMETLELIASENFTSRAVMQACGSVMTNKYAEGYPGKRYYGGCEFVDIAENLARDRAKKLFGCEYVNVQPHSGSSANMAVLFSVLKPGDCIMGLDLSHGGHLTHGSSVNFSGQMYKAHAYGVDGETGIIDMNQVEKMALEVRPRLIICGASAYSQGFDFKAFREIADKVGAFLMADIAHPAGLIVSGLLSDPMPHCHFVTTTTHKTLRGPRGGMIMMGKDFENPMGITIKTKNGQRVKMMSEVMDAEVMPGIQGGPLMHIIAGKAVAFGEALRPEFRQYAMQVRSNAAAMSERFLSLGYNIVSGGTKNHLMLLDLRNKDITGKVVENTLHEAGITVNKNMVPFDDKSPFVTSGIRIGTAAMTTRGMNEDDSRLIAELIDRVILSAASPESSSVCRSVKEEIRSLCLRNPLEGYGVTPS.

(6S)-5,6,7,8-tetrahydrofolate is bound by residues leucine 119 and glycine 123–leucine 125. Lysine 228 carries the post-translational modification N6-(pyridoxal phosphate)lysine. Residue serine 370–phenylalanine 372 participates in (6S)-5,6,7,8-tetrahydrofolate binding.

The protein belongs to the SHMT family. Homodimer. Pyridoxal 5'-phosphate is required as a cofactor.

The protein resides in the cytoplasm. It carries out the reaction (6R)-5,10-methylene-5,6,7,8-tetrahydrofolate + glycine + H2O = (6S)-5,6,7,8-tetrahydrofolate + L-serine. It functions in the pathway one-carbon metabolism; tetrahydrofolate interconversion. Its pathway is amino-acid biosynthesis; glycine biosynthesis; glycine from L-serine: step 1/1. Catalyzes the reversible interconversion of serine and glycine with tetrahydrofolate (THF) serving as the one-carbon carrier. This reaction serves as the major source of one-carbon groups required for the biosynthesis of purines, thymidylate, methionine, and other important biomolecules. Also exhibits THF-independent aldolase activity toward beta-hydroxyamino acids, producing glycine and aldehydes, via a retro-aldol mechanism. This Chlorobium phaeovibrioides (strain DSM 265 / 1930) (Prosthecochloris vibrioformis (strain DSM 265)) protein is Serine hydroxymethyltransferase.